The following is a 408-amino-acid chain: Peptidase T (408 aa).

Position 78 (histidine 78) interacts with Zn(2+). Aspartate 80 is an active-site residue. Aspartate 141 contributes to the Zn(2+) binding site. Glutamate 175 functions as the Proton acceptor in the catalytic mechanism. 3 residues coordinate Zn(2+): glutamate 176, aspartate 198, and histidine 380.

It belongs to the peptidase M20B family. The cofactor is Zn(2+).

It localises to the cytoplasm. The catalysed reaction is Release of the N-terminal residue from a tripeptide.. Its function is as follows. Cleaves the N-terminal amino acid of tripeptides. The chain is Peptidase T from Clostridium botulinum (strain Okra / Type B1).